The chain runs to 174 residues: Transcription antitermination protein NusB (174 aa).

The segment covering 1 to 11 (MSEVETTNDQT) has biased composition (polar residues). The segment at 1 to 29 (MSEVETTNDQTPAPKRKDKKPSRSQLRSA) is disordered.

The protein belongs to the NusB family.

Functionally, involved in transcription antitermination. Required for transcription of ribosomal RNA (rRNA) genes. Binds specifically to the boxA antiterminator sequence of the ribosomal RNA (rrn) operons. In Marinomonas sp. (strain MWYL1), this protein is Transcription antitermination protein NusB.